The primary structure comprises 276 residues: Ribosomal RNA small subunit methyltransferase A (276 aa).

Positions 27, 29, 54, 75, 101, and 123 each coordinate S-adenosyl-L-methionine.

It belongs to the class I-like SAM-binding methyltransferase superfamily. rRNA adenine N(6)-methyltransferase family. RsmA subfamily.

It is found in the cytoplasm. The catalysed reaction is adenosine(1518)/adenosine(1519) in 16S rRNA + 4 S-adenosyl-L-methionine = N(6)-dimethyladenosine(1518)/N(6)-dimethyladenosine(1519) in 16S rRNA + 4 S-adenosyl-L-homocysteine + 4 H(+). Its function is as follows. Specifically dimethylates two adjacent adenosines (A1518 and A1519) in the loop of a conserved hairpin near the 3'-end of 16S rRNA in the 30S particle. May play a critical role in biogenesis of 30S subunits. The chain is Ribosomal RNA small subunit methyltransferase A from Bartonella bacilliformis (strain ATCC 35685 / KC583 / Herrer 020/F12,63).